The chain runs to 754 residues: Protein NUCLEOLAR FACTOR 1 (754 aa).

3 disordered regions span residues 1–56, 69–166, and 390–413; these read MAPN…EAMV, SLGS…ELST, and EDTDDCDGEKTTSKNGNSIKQKSS. Residues 42-52 show a composition bias toward acidic residues; sequence SPEESSIEAES. A compositionally biased stretch (basic and acidic residues) spans 80-93; that stretch reads MNKRRQREEEGKSD. Composition is skewed to acidic residues over residues 94–110 and 138–161; these read TEEDEDDEDEDEEENSG and DTQEDNDNQSEEEDPDDYETDEEV. Polar residues predominate over residues 402 to 413; that stretch reads SKNGNSIKQKSS.

The protein belongs to the UTP25 family. Component of the ribosomal small subunit (SSU) processome composed of at least 40 protein subunits and snoRNA U3. Interacts with THAL in the nucleus. As to expression, preferentially expressed in differentiating cells in young tissues such as floral buds, ovules, embryos, secondary roots, pollen, young seedlings and vascular bundles. Observed ubiquitously.

It is found in the nucleus. The protein localises to the nucleolus. Its function is as follows. DEAD-box RNA helicase-like protein required for pre-18S rRNA processing, specifically at sites A0, A1, and A2. Involved in the control of rRNA expression. Required for embryo development and female gametogenesis. The sequence is that of Protein NUCLEOLAR FACTOR 1 from Arabidopsis thaliana (Mouse-ear cress).